Here is a 652-residue protein sequence, read N- to C-terminus: Neuroendocrine convertase 2 (652 aa).

Positions 1–22 (MKNTHVDLICVFLSIFIGIGEA) are cleaved as a signal peptide. Positions 23-107 (VDVYTNHFHV…QLKGYTRTKR (85 aa)) are excised as a propeptide. Residues 136–481 (QWYLKNTGQA…FGVLDAAEMV (346 aa)) enclose the Peptidase S8 domain. Asparagine 167 carries an N-linked (GlcNAc...) asparagine glycan. Catalysis depends on charge relay system residues aspartate 174 and histidine 215. 2 disulfide bridges follow: cysteine 232-cysteine 382 and cysteine 324-cysteine 354. N-linked (GlcNAc...) asparagine glycosylation is present at asparagine 290. Residue serine 390 is the Charge relay system of the active site. N-linked (GlcNAc...) asparagine glycosylation is present at asparagine 451. Residues 489-625 (TSPPRYHCTA…ELMLHGTREA (137 aa)) form the P/Homo B domain. Cysteine 496 and cysteine 522 are disulfide-bonded. Positions 501–652 (IDTPHEIPAD…TVQKAHKRSH (152 aa)) are required for ubiquitination-mediated degradation. An N-linked (GlcNAc...) asparagine glycan is attached at asparagine 542.

The protein belongs to the peptidase S8 family. Furin subfamily. As to quaternary structure, interacts (via C-terminus) with F-box protein fsn-1 (via SPRY domain); the interaction results in egl-3 proteasomal degradation. Post-translationally, ubiquitinated. As to expression, expressed in head and tail ganglia. Expressed in neurons including mechanosensory and motor neurons, and interneurons (at protein level). Expressed in the nerve ring, ventral nerve cord and intestine.

It is found in the cell projection. Its subcellular location is the axon. The protein resides in the cytoplasmic vesicle. The protein localises to the secretory vesicle lumen. It localises to the secreted. It carries out the reaction Release of protein hormones and neuropeptides from their precursors, generally by hydrolysis of -Lys-Arg-|- bonds.. Functionally, serine endoprotease which cleaves preproteins at paired basic amino acids. Processes FMRFamide-like (flp) and neuropeptide-like protein (nlp) neuropeptides. Probably by processing flp-1 and flp-18, modulates the neuronal excitation-inhibition balance and thus the level of activity of the locomotor circuit. Regulates sensitivity to mechanosensory stimuli. By processing neuropeptides, modulates basal acetylcholine release at the ventral cord neuromuscular junctions. Probably by processing flp neuropeptides, regulates the turning step of male mating behavior. Cleaves pro-insulin-like proteins ins-3, ins-4 and ins-6 into their mature active forms. Together with convertase kpc-1, cleaves pro-insulin-like protein ins-18. By controlling ins-4 and ins-6 processing and thus the activation of the daf-2/InsR pathway, negatively modulates synapse development and synaptic transmission at neuromuscular junctions. Similarly, by controlling ins-4 and ins-6 processing, negatively regulates dauer formation under optimal environmental conditions. Under adverse environmental conditions, may promote dauer formation by processing ins-18, a daf-2/InsR antagonist. May cleave dense-core vesicle membrane protein ida-1. Involved in egg-laying, fat storage and locomotion. This chain is Neuroendocrine convertase 2, found in Caenorhabditis elegans.